Reading from the N-terminus, the 198-residue chain is NAD(P)H quinone oxidoreductase PST1 (198 aa).

In terms of domain architecture, Flavodoxin-like spans 6-192; that stretch reads VAIIIYSLYH…AIAKQQGEDF (187 aa). FMN contacts are provided by residues 12–16 and 112–164; these read SLYHH and VFVW…SPWG.

Belongs to the WrbA family. It depends on FMN as a cofactor.

Its subcellular location is the cell membrane. It carries out the reaction a quinone + NADH + H(+) = a quinol + NAD(+). The catalysed reaction is a quinone + NADPH + H(+) = a quinol + NADP(+). Flavodoxin-like protein (FLP) that plays a role in cell wall integrity, oxidative stress protection and virulence. FLPs act as NAD(P)H quinone oxidoreductases. Reduces ubiquinone (coenzyme Q), enabling it to serve as an antioxidant in the membrane. This chain is NAD(P)H quinone oxidoreductase PST1, found in Candida albicans (strain SC5314 / ATCC MYA-2876) (Yeast).